The sequence spans 349 residues: uncharacterized protein (349 aa).

The first 26 residues, 1-26, serve as a signal peptide directing secretion; sequence MQSHAGGSRAPLGLLLICLCLPGLFA. Disordered stretches follow at residues 30–113 and 322–349; these read GAPE…QGMA and YPAG…GITP. Positions 39–52 are enriched in polar residues; the sequence is HSGQPSFTSLLNPG. The segment covering 90-101 has biased composition (pro residues); the sequence is NGPPFWGPPPME.

As to quaternary structure, binds to numerous extracellular matrix proteins.

The protein resides in the secreted. The protein localises to the extracellular space. It localises to the extracellular matrix. This is an uncharacterized protein from Mus musculus (Mouse).